A 911-amino-acid chain; its full sequence is MHRVMTIHPDIAPPPDLPAPAEPPAKVSPMMEQYHEIKAANPGLLLFYRMGDFYELFFEDAEIASRALGITLTKRGKHQGMDIPMCGVPVERSDDYLHRLIALGHRVAVCEQTEDPAAARARKSVVRRDVVRLITPGTLTEDTLLDARANNYLLAIARARGSSGTDRIGLAWIDISTGEFSVTECATGELSATLARINPNEAIVSDALYSDAELGPSLRELAAVTPLTRDVFDSATAERRLCDYFAVATMDGLAALSRLEAAAAAACVTYVDRTQLGKRPPLSPPSREATGATMAIDPATRANLELTRTLAGERRGSLLDAIDCTVTAAGSRLLAQRLAAPLTDAAAIARRLDAVEVFVVAPALREQIRSALRAAPDMARALARLSLGRGGPRDLASLRDGIVAADQGLQQLSQLTAPPQEIAAAMAALRRPSRDLCDELGRALADDLPLQKRDGGFVRDGYEAALDETRKLRDASRLVVAAMQARYADDTGVKGLKIRHNNVLGYFVEVTAQHGDRLMAPPLNATFIHRQTLAGQVRFTTAELGEIEAKIANAGDRALGLELEIFDRLAALIETAGEDLRAAAHAFALLDVATALAKLASDDNYVRPEVDQSLSFAIEGGRHPVVEQALKRAGEPFIANACDLSPGPAQASGQIWLLTGPNMAGKSTFLRQNALIALLAQTGSYVPAARARIGIVDRLFSRVGAADDLARGRSTFMVEMVETAAILNQATERALVILDEIGRGTATFDGLSIAWAAIEHLHEQNRCRALFATHYHELTALSAKLPRLFNATVRVKEWRGEVVFLHEVLPGSADRSYGIQVAKLAGLPASVVARAKSVLAKLEANDRGQPKALIDDLPLFAITARAPAEPSPPSEAEQLIAAVQALHPDELSPREALDALYALKAKLPKTT.

G660–S667 lines the ATP pocket.

This sequence belongs to the DNA mismatch repair MutS family.

In terms of biological role, this protein is involved in the repair of mismatches in DNA. It is possible that it carries out the mismatch recognition step. This protein has a weak ATPase activity. This Rhodopseudomonas palustris (strain HaA2) protein is DNA mismatch repair protein MutS.